The chain runs to 245 residues: rRNA adenine N-6-methyltransferase (245 aa).

S-adenosyl-L-methionine contacts are provided by Asn10, Leu12, Gly37, Glu58, Asp83, and Asn100.

Belongs to the class I-like SAM-binding methyltransferase superfamily. rRNA adenine N(6)-methyltransferase family.

It carries out the reaction adenosine(2085) in 23S rRNA + 2 S-adenosyl-L-methionine = N(6)-dimethyladenosine(2085) in 23S rRNA + 2 S-adenosyl-L-homocysteine + 2 H(+). Functionally, this protein produces a dimethylation of the adenine residue at position 2085 in 23S rRNA, resulting in reduced affinity between ribosomes and macrolide-lincosamide-streptogramin B antibiotics. The sequence is that of rRNA adenine N-6-methyltransferase (ermBC) from Escherichia coli.